We begin with the raw amino-acid sequence, 241 residues long: Carboxy-S-adenosyl-L-methionine synthase (241 aa).

S-adenosyl-L-methionine contacts are provided by residues Tyr-38, Gly-63–Ser-65, Asp-88–Asn-89, Asp-116–Ile-117, Asn-131, and Arg-198.

It belongs to the class I-like SAM-binding methyltransferase superfamily. Cx-SAM synthase family. As to quaternary structure, homodimer.

The enzyme catalyses prephenate + S-adenosyl-L-methionine = carboxy-S-adenosyl-L-methionine + 3-phenylpyruvate + H2O. Catalyzes the conversion of S-adenosyl-L-methionine (SAM) to carboxy-S-adenosyl-L-methionine (Cx-SAM). This Haemophilus influenzae (strain ATCC 51907 / DSM 11121 / KW20 / Rd) protein is Carboxy-S-adenosyl-L-methionine synthase.